Consider the following 1141-residue polypeptide: Sterol regulatory element-binding protein 2 (1141 aa).

The transcriptional activation (acidic) stretch occupies residues 1–50; that stretch reads MDDSGELGGLETMETLTELGDELTLGDIDEMLQFVSNQVGEFPDLFSEQL. At 1–479 the chain is on the cytoplasmic side; the sequence is MDDSGELGGL…PPVALGMVDR (479 aa). A disordered region spans residues 48–144; it reads EQLCSSFPGS…PQPQPQPQTQ (97 aa). Residues 63-82 are compositionally biased toward low complexity; sequence SSGSSGSSSSSSNGRGSSSG. Residues 88-97 show a composition bias toward polar residues; sequence VQRSFTQVTL. Residues 98-110 are compositionally biased toward low complexity; the sequence is PSFSPSAASPQAP. A compositionally biased stretch (polar residues) spans 114–126; it reads VKVSPTSVPTTPR. The tract at residues 237–491 is interaction with LMNA; it reads QQVPVLVQPQ…ILLCVLTFLC (255 aa). The 51-residue stretch at 330–380 folds into the bHLH domain; it reads ERRTTHNIIEKRYRSSINDKIIELKDLVMGTDAKMHKSGVLRKAIDYIKYL. The tract at residues 380–401 is leucine-zipper; it reads LQQVNHKLRQENMVLKLANQKN. K464 is covalently cross-linked (Glycyl lysine isopeptide (Lys-Gly) (interchain with G-Cter in SUMO2)). A helical membrane pass occupies residues 480 to 500; it reads SRILLCVLTFLCLSFNPLTSL. Topologically, residues 501-533 are lumenal; it reads LQWGGAHDSDQHPHSGSGRSVLSFESGSGGWFD. Residues 534–554 form a helical membrane-spanning segment; it reads WMMPTLLLWLVNGVIVLSVFV. The Cytoplasmic portion of the chain corresponds to 555 to 1139; that stretch reads KLLVHGEPVI…VKLGGGTAIA (585 aa). Phosphoserine is present on residues S855 and S1098.

The protein belongs to the SREBP family. As to quaternary structure, forms a tight complex with SCAP, the SCAP-SREBP complex, in the endoplasmic reticulum membrane and the Golgi apparatus. Interacts with PAQR3; the interaction anchors the SCAP-SREBP complex to the Golgi apparatus in low cholesterol conditions. Interacts (via C-terminal domain) with RNF139. In terms of assembly, homodimer; efficient DNA binding of the soluble transcription factor fragment requires dimerization with another bHLH protein. Interacts with LMNA. In terms of processing, processed in the Golgi apparatus, releasing the protein from the membrane. At low cholesterol the SCAP-SREBP complex is recruited into COPII vesicles for export from the endoplasmic reticulum. In the Golgi, complex SREBPs are cleaved sequentially by site-1 (MBTPS1, S1P) and site-2 (MBTPS2, S2P) protease. The first cleavage by site-1 protease occurs within the luminal loop, the second cleavage by site-2 protease occurs within the first transmembrane domain, releasing the transcription factor from the Golgi membrane. Apoptosis triggers cleavage by the cysteine proteases caspase-3 and caspase-7. Cleavage and activation is induced by mediated cholesterol efflux. Post-translationally, phosphorylated by AMPK, leading to suppress protein processing and nuclear translocation, and repress target gene expression. SCAP-free SREBF2 is ubiquitinated by the BCR(ARMC5) complex, leading to its degradation. In terms of processing, ubiquitinated; the nuclear form has a rapid turnover and is rapidly ubiquitinated and degraded by the proteasome in the nucleus. Ubiquitously expressed in adult and fetal tissues.

Its subcellular location is the endoplasmic reticulum membrane. It localises to the golgi apparatus membrane. The protein localises to the cytoplasmic vesicle. The protein resides in the COPII-coated vesicle membrane. It is found in the nucleus. Its activity is regulated as follows. Activation by cleavage is down-regulated upon activation of SIRT3-dependent PRKAA1/AMPK-alpha signaling cascade which leads to inhibition of ATP-consuming lipogenesis to restore cellular energy balance. Precursor of the transcription factor form (Processed sterol regulatory element-binding protein 2), which is embedded in the endoplasmic reticulum membrane. Low sterol concentrations promote processing of this form, releasing the transcription factor form that translocates into the nucleus and activates transcription of genes involved in cholesterol biosynthesis. Functionally, key transcription factor that regulates expression of genes involved in cholesterol biosynthesis. Binds to the sterol regulatory element 1 (SRE-1) (5'-ATCACCCCAC-3'). Has dual sequence specificity binding to both an E-box motif (5'-ATCACGTGA-3') and to SRE-1 (5'-ATCACCCCAC-3'). Regulates transcription of genes related to cholesterol synthesis pathway. The polypeptide is Sterol regulatory element-binding protein 2 (Homo sapiens (Human)).